A 362-amino-acid chain; its full sequence is MAQIFNFSSGPAMLPVEVLKQAQQELRDWNGLGTSVMEVSHRGKEFIQVAEEAEKDFRDLLNVPSNYKVLFCHGGGRGQFAAVPLNILGDKTTADYVDAGYWAASAIKEAKKYCTPNVFDAKVTVDGLRAVKPMREWQLSDNAAYMHYCPNETIDGIAIDETPDFGKDVVVAADFSSTILSRPIDVSRYGVIYAGAQKNIGPAGLTIVIVREDLLGKANVACPSILDYSILNDNGSMFNTPPTFAWYLSGLVFKWLKANGGVAEMDKINQQKAELLYGVIDNSDFYRNDVAKANRSRMNVPFQLADSALDKLFLEESFAAGLHALKGHRVVGGMRASIYNAMPLEGVKALTDFMVEFERRHG.

L-glutamate-binding residues include Ser-9 and Arg-42. Pyridoxal 5'-phosphate is bound by residues 76–77 (GR), Trp-102, Thr-153, Asp-174, and Gln-197. An N6-(pyridoxal phosphate)lysine modification is found at Lys-198. 239 to 240 (NT) is a binding site for pyridoxal 5'-phosphate.

This sequence belongs to the class-V pyridoxal-phosphate-dependent aminotransferase family. SerC subfamily. As to quaternary structure, homodimer. The cofactor is pyridoxal 5'-phosphate.

The protein resides in the cytoplasm. It carries out the reaction O-phospho-L-serine + 2-oxoglutarate = 3-phosphooxypyruvate + L-glutamate. The catalysed reaction is 4-(phosphooxy)-L-threonine + 2-oxoglutarate = (R)-3-hydroxy-2-oxo-4-phosphooxybutanoate + L-glutamate. Its pathway is amino-acid biosynthesis; L-serine biosynthesis; L-serine from 3-phospho-D-glycerate: step 2/3. It participates in cofactor biosynthesis; pyridoxine 5'-phosphate biosynthesis; pyridoxine 5'-phosphate from D-erythrose 4-phosphate: step 3/5. Its function is as follows. Catalyzes the reversible conversion of 3-phosphohydroxypyruvate to phosphoserine and of 3-hydroxy-2-oxo-4-phosphonooxybutanoate to phosphohydroxythreonine. This Escherichia coli O157:H7 protein is Phosphoserine aminotransferase.